The chain runs to 281 residues: Ras-related protein Rab-40C (281 aa).

The GTP site is built by serine 23, glycine 26, lysine 27, and serine 46. The tract at residues 41-49 is switch-I; that stretch reads SPYAYSNGI. Residues serine 46 and aspartate 69 each coordinate Mg(2+). GTP contacts are provided by glycine 72, asparagine 126, and arginine 127. Residues 72–88 form a switch-II region; it reads GQGRFCTIFRSYSRGAQ. One can recognise an SOCS box domain in the interval 175-228; sequence LMRHGMEKIWRPNRVFSLQDLCCRAIVSCTPVHLIDKLPLPVTIKSHLKSFSMA. Residues 245–281 are disordered; the sequence is SGAGGGGSKGNSLKRSKSIRPPQSPPQNCSRSNCKIS. Over residues 270–281 the composition is skewed to polar residues; it reads PQNCSRSNCKIS. Cysteine 273 carries S-palmitoyl cysteine lipidation. Cysteine 278 carries the S-geranylgeranyl cysteine lipid modification.

It belongs to the small GTPase superfamily. Rab family. Component of the cullin-5-RING E3 ubiquitin-protein ligase complex (ECS(RAB40C) complex) composed of CUL5, Elongin BC (ELOB and ELOC), RNF7/RBX2 and RAB40C. Interacts with protein phosphatase 6 (PP6) complex components ANKRD28, ANKRD52, PPP6C, PP6R1 and PP6R2; the interaction leads to ANKRD28 ubiquitination and decreased PP6 activity. Interacts with DAB2IP; DAB2IP acts as a GAP for RAB40C. Requires Mg(2+) as cofactor.

Its subcellular location is the cell membrane. The protein resides in the cytoplasm. The protein localises to the cytosol. It is found in the golgi apparatus membrane. The catalysed reaction is GTP + H2O = GDP + phosphate + H(+). Its pathway is protein modification; protein ubiquitination. Regulated by guanine nucleotide exchange factors (GEFs) which promote the exchange of bound GDP for free GTP. Regulated by GTPase activating proteins (GAPs) including DAB2IP, which increase the GTP hydrolysis activity. Inhibited by GDP dissociation inhibitors (GDIs). Functionally, RAB40C small GTPase acts as substrate-recognition component of the ECS(RAB40C) E3 ubiquitin ligase complex which mediates the ubiquitination and subsequent proteasomal degradation of target proteins. The Rab40 subfamily belongs to the Rab family that are key regulators of intracellular membrane trafficking, from the formation of transport vesicles to their fusion with membranes. Rabs cycle between an inactive GDP-bound form and an active GTP-bound form that is able to recruit to membranes different sets of downstream effectors directly responsible for vesicle formation, movement, tethering and fusion. As part of the ECS(RAB40C) complex, mediates ANKRD28 ubiquitination and degradation, thereby inhibiting protein phosphatase 6 (PP6) complex activity and focal adhesion assembly during cell migration. Also negatively regulate lipid droplets accumulation in a GTP-dependent manner. This chain is Ras-related protein Rab-40C, found in Homo sapiens (Human).